The following is a 359-amino-acid chain: MKPFLRSQLARHAQRLGELDFLLARPDIMADMVQYRSIAREHAEVTQVAGRYARYLQREADLGAARELLADPGMAELAQEEIDSSQTELRQLEDELQRLLLPKEPDDARNAFVEIRAGTGGDESALFAGDLTRMYTRYAARRGWQVQVLSENPAELGGYKEIVLRIDGEQVYGTLKFESGGHRVQRVPATETQGRVHTSACTVAVMPEPDPARAIALNPAELRIDTFRASGAGGQHINKTDSAVRVVHLPTGIVAECQDGRSQHGNKARALQVLQARLQEKERSERAAKEAALRKGLIGSGERSDRIRTYNFPQGRLTDHRIQLTLYQLQQLLDGELDPMLQALGHAREAEQLQELERG.

Residue Q235 is modified to N5-methylglutamine.

The protein belongs to the prokaryotic/mitochondrial release factor family. In terms of processing, methylated by PrmC. Methylation increases the termination efficiency of RF1.

It localises to the cytoplasm. In terms of biological role, peptide chain release factor 1 directs the termination of translation in response to the peptide chain termination codons UAG and UAA. This Verminephrobacter eiseniae (strain EF01-2) protein is Peptide chain release factor 1.